A 273-amino-acid polypeptide reads, in one-letter code: N(omega)-hydroxy-L-arginine amidinohydrolase (273 aa).

Mn(2+) contacts are provided by Asp109, His111, Asp113, Asp198, and Asp200.

Belongs to the arginase family. Requires Mn(2+) as cofactor.

It catalyses the reaction N(omega)-hydroxy-L-arginine + H2O = hydroxyurea + L-ornithine. Its function is as follows. Involved in the biosynthesis of the antibiotic D-cycloserine (DCS), a cyclic structural analog of D-alanine, used as an antitubercular agent. Catalyzes the hydrolysis of N(omega)-hydroxy-L-arginine (NHA) to yield hydroxyurea (HU) and L-ornithine. The protein is N(omega)-hydroxy-L-arginine amidinohydrolase of Streptomyces lavendulae.